The chain runs to 415 residues: uncharacterized protein (415 aa).

[4Fe-4S] cluster-binding residues include Cys66, Cys72, Cys75, and Cys149. 4 residues coordinate S-adenosyl-L-methionine: Gln249, Phe276, Glu296, and Asp344. Catalysis depends on Cys370, which acts as the Nucleophile.

Belongs to the class I-like SAM-binding methyltransferase superfamily. RNA M5U methyltransferase family.

This is an uncharacterized protein from Brucella suis biovar 1 (strain 1330).